The chain runs to 105 residues: Large ribosomal subunit protein uL24 (105 aa).

This sequence belongs to the universal ribosomal protein uL24 family. In terms of assembly, part of the 50S ribosomal subunit.

Functionally, one of two assembly initiator proteins, it binds directly to the 5'-end of the 23S rRNA, where it nucleates assembly of the 50S subunit. Its function is as follows. One of the proteins that surrounds the polypeptide exit tunnel on the outside of the subunit. This is Large ribosomal subunit protein uL24 from Dictyoglomus turgidum (strain DSM 6724 / Z-1310).